A 136-amino-acid polypeptide reads, in one-letter code: Alpha-2-purothionin (136 aa).

Residues 1 to 27 (MGSKGLKGVMVCLLILGLVLEQVQVEG) form the signal peptide. 4 cysteine pairs are disulfide-bonded: cysteine 30/cysteine 66, cysteine 31/cysteine 58, cysteine 39/cysteine 56, and cysteine 43/cysteine 52. Positions 73–136 (LALESNSDEP…GDAGLTSLDA (64 aa)) are cleaved as a propeptide — acidic domain.

It belongs to the plant thionin (TC 1.C.44) family. 4 C-C subfamily.

The protein resides in the secreted. In terms of biological role, thionins are small plant proteins which are toxic to animal cells. They seem to exert their toxic effect at the level of the cell membrane. Their precise function is not known. The polypeptide is Alpha-2-purothionin (THI1.2) (Triticum aestivum (Wheat)).